The sequence spans 333 residues: Phosphoribosylformylglycinamidine cyclo-ligase (333 aa).

Belongs to the AIR synthase family.

It localises to the cytoplasm. It catalyses the reaction 2-formamido-N(1)-(5-O-phospho-beta-D-ribosyl)acetamidine + ATP = 5-amino-1-(5-phospho-beta-D-ribosyl)imidazole + ADP + phosphate + H(+). Its pathway is purine metabolism; IMP biosynthesis via de novo pathway; 5-amino-1-(5-phospho-D-ribosyl)imidazole from N(2)-formyl-N(1)-(5-phospho-D-ribosyl)glycinamide: step 2/2. This is Phosphoribosylformylglycinamidine cyclo-ligase from Methanosarcina barkeri (strain Fusaro / DSM 804).